Consider the following 902-residue polypeptide: Ribonuclease E (902 aa).

Residues 39–119 (SNIYKGKITR…GTKGAALTTF (81 aa)) enclose the S1 motif domain. 2 residues coordinate Mg(2+): Asp303 and Asp346. The Zn(2+) site is built by Cys404 and Cys407. The segment at 404 to 407 (CPRC) is required for zinc-mediated homotetramerization and catalytic activity. The tract at residues 881 to 902 (GKNSAGVHSATNFSNSPVSKLK) is disordered. Polar residues predominate over residues 889-902 (SATNFSNSPVSKLK).

It belongs to the RNase E/G family. RNase E subfamily. In terms of assembly, component of the RNA degradosome, which is a multiprotein complex involved in RNA processing and mRNA degradation. Within the RNA degradosome, RNase E assembles into a homotetramer formed by a dimer of dimers. Zn(2+) is required as a cofactor. The cofactor is Mg(2+).

The protein localises to the cytoplasm. It localises to the cell inner membrane. The enzyme catalyses Endonucleolytic cleavage of single-stranded RNA in A- and U-rich regions.. Endoribonuclease that plays a central role in RNA processing and decay. Required for the maturation of 5S and 16S rRNAs and the majority of tRNAs. Also involved in the degradation of most mRNAs. This Buchnera aphidicola subsp. Acyrthosiphon pisum (strain APS) (Acyrthosiphon pisum symbiotic bacterium) protein is Ribonuclease E.